A 189-amino-acid polypeptide reads, in one-letter code: MAGKFTNMRYDNQAYNEEIRRSTDPLLYKLDSNYSVNCSPCFAAHGPIGGHNNSVAIGNQIDVDSVLRGVGRINSKSNQQQAPESLNQYTMYTPRECSPSLESHHSRFSHPAHDIRGLNVPDMRLGYPLHDPQCQIFEDFGVNTRLQAKDNHRAVWQQPMDQKSVYPKARPGREKNCTVSVNCTYAPYS.

The protein belongs to the mimivirus R457/R459 family.

The protein resides in the virion. This is an uncharacterized protein from Acanthamoeba polyphaga mimivirus (APMV).